A 1337-amino-acid polypeptide reads, in one-letter code: GTPase activating protein homolog 3 (1337 aa).

Positions 14-264 constitute an F-BAR domain; the sequence is PESFADLWDG…LINSINNEDE (251 aa). Disordered stretches follow at residues 279-328 and 345-392; these read PKPF…LPIF and ITNS…RFST. Positions 293–302 are enriched in pro residues; it reads TPPPPPPPQI. Polar residues predominate over residues 345 to 358; that stretch reads ITNSLSLSSDSLQT. A Rho-GAP domain is found at 422-611; it reads CKIEDIMVAQ…NIIEHFKPLQ (190 aa). 3 disordered regions span residues 612–689, 733–781, and 794–821; these read VNDS…TTNT, VNNN…HTVA, and ITTP…SPSE. Low complexity-rich tracts occupy residues 621–637, 645–687, and 734–772; these read SSSS…SIES, SSTN…SSTT, and NNNN…QQVS. The stretch at 830 to 859 forms a coiled coil; sequence YLEDQERCKQRIDELHTQVNELYSDITTIE. 2 disordered regions span residues 1041–1102 and 1114–1166; these read SDPD…INNS and KSAL…AHAI. Residues 1047-1063 show a composition bias toward polar residues; that stretch reads SPPTISNTTNRLLNTSG. Low complexity-rich tracts occupy residues 1064–1102 and 1114–1159; these read STDF…INNS and KSAL…TTTN. Positions 1189 to 1219 form a coiled coil; it reads LEINNKLHSQLTEELKKKQQQYKQLIFDIID.

It is found in the cytoplasm. It localises to the contractile vacuole. Rho GTPase-activating protein involved in the signal transduction pathway. The chain is GTPase activating protein homolog 3 (mgp3) from Dictyostelium discoideum (Social amoeba).